Reading from the N-terminus, the 370-residue chain is MESNSSQCEDETPSLLWGLDPVFLAFAKLYIRDILDLKESGQVQGVFFYNGHPIKQVDILGTVIGVREKDAFYSYGVDDSTGVINCICWKRLNNTKSSSATATPSARELSLTSQLKKLQETIAQRAKLEIGDIIRVRGHIRMFRGEREIHATTYYKVDDPVCNVQIARMLELPAIYRKVYDQPFHSPALKEDEALSNPGTLDLDSLTCLLSEKAKEFLVENRVQSFYQQELETVESLLSLANQPVIHSACSGQMGFKNDTTSRAIHSIFRNAVKLLQEEGLVFQKDGGFDNLFYVTREDKELHRKIHRIIQEECQKPNHVEKGCHFLHILACARLSLSPGLSEPVLQQVLQLLEDQSDIVSTTEKYYTAF.

Residues 1 to 187 form an interaction with CTC1 region; sequence MESNSSQCED…KVYDQPFHSP (187 aa). Residues 57 to 157 constitute a DNA-binding region (OB); that stretch reads VDILGTVIGV…EIHATTYYKV (101 aa). Winged helix-turn-helix (wHTH) regions lie at residues 193-297 and 298-370; these read EALS…YVTR and EDKE…YTAF.

It belongs to the STN1 family. Component of the CST complex, composed of TEN1/C17orf106, CTC1/C17orf68 and STN1; in the complex interacts directly with TEN1 and CTC1. Interacts with ACD/TPP1, POT1 and POLA1.

It localises to the nucleus. The protein localises to the chromosome. The protein resides in the telomere. Component of the CST complex proposed to act as a specialized replication factor promoting DNA replication under conditions of replication stress or natural replication barriers such as the telomere duplex. The CST complex binds single-stranded DNA with high affinity in a sequence-independent manner, while isolated subunits bind DNA with low affinity by themselves. Initially the CST complex has been proposed to protect telomeres from DNA degradation. However, the CST complex has been shown to be involved in several aspects of telomere replication. The CST complex inhibits telomerase and is involved in telomere length homeostasis; it is proposed to bind to newly telomerase-synthesized 3' overhangs and to terminate telomerase action implicating the association with the ACD:POT1 complex thus interfering with its telomerase stimulation activity. The CST complex is also proposed to be involved in fill-in synthesis of the telomeric C-strand probably implicating recruitment and activation of DNA polymerase alpha. The CST complex facilitates recovery from many forms of exogenous DNA damage; seems to be involved in the re-initiation of DNA replication at repaired forks and/or dormant origins. Required for efficicient replication of the duplex region of the telomere. Promotes efficient replication of lagging-strand telomeres. Promotes general replication start following replication-fork stalling implicating new origin firing. May be in involved in C-strand fill-in during late S/G2 phase independent of its role in telomere duplex replication. In Bos taurus (Bovine), this protein is CST complex subunit STN1.